A 260-amino-acid polypeptide reads, in one-letter code: Transcriptional activator protein AsaR (260 aa).

The 66-residue stretch at 176 to 241 (EDDPQEALTD…QAIAKGVSSG (66 aa)) folds into the HTH luxR-type domain. The segment at residues 200-219 (SGEIACILGITERTVNYHLN) is a DNA-binding region (H-T-H motif).

This sequence belongs to the autoinducer-regulated transcriptional regulatory protein family.

Functions as a BHL-responsive transcriptional regulator. The sequence is that of Transcriptional activator protein AsaR from Aeromonas salmonicida.